A 500-amino-acid polypeptide reads, in one-letter code: Kynurenine 3-monooxygenase acdD (500 aa).

FAD is bound by residues Val17 and 36–38; that span reads ELR. Residue Asn50 is glycosylated (N-linked (GlcNAc...) asparagine). Ala58 is an FAD binding site. The L-kynurenine site is built by Arg89 and Tyr106. Arg118 and Leu143 together coordinate FAD. N-linked (GlcNAc...) asparagine glycosylation is present at Asn163. FAD contacts are provided by residues Asp321 and 332–335; that span reads QGLN. 2 residues coordinate L-kynurenine: Asn392 and Tyr428. Residues 451 to 471 traverse the membrane as a helical segment; the sequence is LLLYGSISAIISSAAIVGVLA.

This sequence belongs to the aromatic-ring hydroxylase family. KMO subfamily. Requires FAD as cofactor.

Its subcellular location is the mitochondrion outer membrane. The catalysed reaction is L-kynurenine + NADPH + O2 + H(+) = 3-hydroxy-L-kynurenine + NADP(+) + H2O. The protein operates within secondary metabolite biosynthesis. It functions in the pathway cofactor biosynthesis; NAD(+) biosynthesis; quinolinate from L-kynurenine: step 1/3. Indoleamine 2,3-dioxygenase; part of the gene cluster that mediates the biosynthesis of aspcandine, a pyrrolobenzazepine alkaloid. Initially, the indoleamine 2,3-dioxygenase acdA accepts L-tryptophan and performs the oxidative opening of the indole ring to yield N'-formyl-L-kynurenine, which undergoes the spontaneous deformylation reaction to provide L-kynurenine. The kynurenine 3-monooxygenase acdD then hydroxylates L-kynurenine to afford 3-hydroxy-L-kynurenine. 3-hydroxy-L-kynurenine is activated by the A domain of the NRPS-PKS acdB and subsequently loaded onto the enzyme. The KS domain conducts the decarboxylative condensation of the 3-hydroxy-L-kynurenyl and malonyl moieties, and subsequent nucleophilic attacks by the two amino groups would occur nonenzymatically at two distinct positions, achieving the chain release and the construction of the tricyclic system. Finally, the dehydration reaction completes the biosynthesis to yield aspcandine. The sequence is that of Kynurenine 3-monooxygenase acdD from Aspergillus candidus.